The primary structure comprises 434 residues: Enolase (434 aa).

Gln163 is a binding site for (2R)-2-phosphoglycerate. Residue Glu205 is the Proton donor of the active site. Residues Asp242, Glu291, and Asp318 each contribute to the Mg(2+) site. (2R)-2-phosphoglycerate is bound by residues Lys343, Arg372, Ser373, and Lys394. Catalysis depends on Lys343, which acts as the Proton acceptor.

This sequence belongs to the enolase family. The cofactor is Mg(2+).

It is found in the cytoplasm. The protein localises to the secreted. Its subcellular location is the cell surface. It catalyses the reaction (2R)-2-phosphoglycerate = phosphoenolpyruvate + H2O. Its pathway is carbohydrate degradation; glycolysis; pyruvate from D-glyceraldehyde 3-phosphate: step 4/5. Catalyzes the reversible conversion of 2-phosphoglycerate (2-PG) into phosphoenolpyruvate (PEP). It is essential for the degradation of carbohydrates via glycolysis. In Streptococcus pneumoniae serotype 19F (strain G54), this protein is Enolase.